The following is a 247-amino-acid chain: Ribosomal RNA small subunit methyltransferase J (247 aa).

Residues 101 to 102 (RD), 117 to 118 (ER), 153 to 154 (SS), and Asp171 each bind S-adenosyl-L-methionine.

This sequence belongs to the methyltransferase superfamily. RsmJ family.

It localises to the cytoplasm. The catalysed reaction is guanosine(1516) in 16S rRNA + S-adenosyl-L-methionine = N(2)-methylguanosine(1516) in 16S rRNA + S-adenosyl-L-homocysteine + H(+). In terms of biological role, specifically methylates the guanosine in position 1516 of 16S rRNA. The polypeptide is Ribosomal RNA small subunit methyltransferase J (Photorhabdus laumondii subsp. laumondii (strain DSM 15139 / CIP 105565 / TT01) (Photorhabdus luminescens subsp. laumondii)).